A 79-amino-acid chain; its full sequence is Small ribosomal subunit protein eS17 (79 aa).

The protein belongs to the eukaryotic ribosomal protein eS17 family.

In Saccharolobus islandicus (strain Y.N.15.51 / Yellowstone #2) (Sulfolobus islandicus), this protein is Small ribosomal subunit protein eS17.